Here is a 72-residue protein sequence, read N- to C-terminus: Large ribosomal subunit protein bL31 (72 aa).

Zn(2+) is bound by residues Cys16, Cys18, Cys38, and Cys41.

This sequence belongs to the bacterial ribosomal protein bL31 family. Type A subfamily. As to quaternary structure, part of the 50S ribosomal subunit. Requires Zn(2+) as cofactor.

Binds the 23S rRNA. The chain is Large ribosomal subunit protein bL31 from Aliivibrio fischeri (strain ATCC 700601 / ES114) (Vibrio fischeri).